A 125-amino-acid polypeptide reads, in one-letter code: Aldolase FrzH (125 aa).

It carries out the reaction (2S)-3-(4-methoxyphenyl)-2-[(3S)-3-(methylamino)-8-oxo-1-azaspiro[4.5]decan-1-yl]propanal = (1S,3S,6S,7S,8R)-7-hydroxy-6-[(4-methoxyphenyl)methyl]-3-(methylamino)-5-azatricyclo[6.3.1.0(1,5)]dodecan-9-one. It participates in secondary metabolite biosynthesis. Functionally, aldolase; part of the gene cluster that mediates the biosynthesis of the alkaloid (-)-FR901483, a potent immunosuppressant that shows efficacy in animal models and a probable inhibitor of purine nucleotide biosynthesis by targeting phosphoribosylpyrophosphate amidotransferase (PPAT). Within the pathway, FrzH is a new kind of aldolase with no similarities to known aldolases, and which catalyzes the intramolecular aldol condensation via formation of a C9-C3' bond to yield an aza-tricyclic product. The biosynthesis of (-)-FR901483 starts with the condensation of two L-tyrosines to yield (S,S)-dityrosyl-piperazine. This process occurs in 3 steps with the non-canonical nonribosomal peptide synthetase FrzA catalyzing the reduction of L-tyrosine into L-tyrosinal, the spontaneous condensation of 2 L-tyrosinal units, and the subsequent reduction by the NmrA-like family domain-containing oxidoreductase FrzB. The cytochrome P450 monooxygenase FrzC then performs coupling between N10 and C1' to morph the piperazine into a 1,4-diazabicyclo[3.2.1]octane spiro-fused to a 2,5-cyclohexadienone. The dienone portion is further reduced to cyclohexanone by the flavin-dependent reductase FrzD. The methyltranserases (MTs) FrzE and FrzF are then involved in the methylation at the C10' amine and the C4 phenolic oxygen, respectively. The order of the two MTs appear to be interchangeable. Cleavage of the C9-N10' bond by the dioxygenase FrzG then leads to formation of a conjugated iminium. In addition to the oxidation of C9, an additional dehydrogenation between C7 and C8 can occur to give a likely shunt product. The next biosynthetic step is the intramolecular aldol condensation catalyzed by the newly identified aldolase FrzH to yield an aza-tricyclic product with the formation of a C9-C3' bond. The short-chain dehydrogenase/reductase FrzI then produces dephospho-(-)-FR901483 that is phosphorylated at C4'-OH into (-)-FR901483 by the phosphotransferase FrzJ. The chain is Aldolase FrzH from Cladobotryum sp.